A 105-amino-acid chain; its full sequence is Met repressor (105 aa).

Belongs to the MetJ family. In terms of assembly, homodimer.

The protein resides in the cytoplasm. In terms of biological role, this regulatory protein, when combined with SAM (S-adenosylmethionine) represses the expression of the methionine regulon and of enzymes involved in SAM synthesis. This chain is Met repressor, found in Salmonella dublin (strain CT_02021853).